Here is a 240-residue protein sequence, read N- to C-terminus: Proteasome subunit alpha (240 aa).

This sequence belongs to the peptidase T1A family. As to quaternary structure, the 20S proteasome core is composed of 14 alpha and 14 beta subunits that assemble into four stacked heptameric rings, resulting in a barrel-shaped structure. The two inner rings, each composed of seven catalytic beta subunits, are sandwiched by two outer rings, each composed of seven alpha subunits. The catalytic chamber with the active sites is on the inside of the barrel. Has a gated structure, the ends of the cylinder being occluded by the N-termini of the alpha-subunits. Is capped at one or both ends by the proteasome regulatory ATPase, PAN.

It is found in the cytoplasm. Its activity is regulated as follows. The formation of the proteasomal ATPase PAN-20S proteasome complex, via the docking of the C-termini of PAN into the intersubunit pockets in the alpha-rings, triggers opening of the gate for substrate entry. Interconversion between the open-gate and close-gate conformations leads to a dynamic regulation of the 20S proteasome proteolysis activity. Component of the proteasome core, a large protease complex with broad specificity involved in protein degradation. The sequence is that of Proteasome subunit alpha from Methanoregula boonei (strain DSM 21154 / JCM 14090 / 6A8).